Consider the following 136-residue polypeptide: MLQPKRTKFRKVHKGRNRGLAQGTDVSFGTFGLKAVGRGRLTARQIEAARRAMTRAVKRQGKIWIRVFPDKPITEKPLEVRMGKGKGNVEYWVALIQPGKVLYEMDGVPEELAREAFQLAAAKLPIKTTFVTKTVM.

This sequence belongs to the universal ribosomal protein uL16 family. As to quaternary structure, part of the 50S ribosomal subunit.

In terms of biological role, binds 23S rRNA and is also seen to make contacts with the A and possibly P site tRNAs. The chain is Large ribosomal subunit protein uL16 from Pectobacterium atrosepticum (strain SCRI 1043 / ATCC BAA-672) (Erwinia carotovora subsp. atroseptica).